The primary structure comprises 211 residues: Ubiquitin-conjugating enzyme E2 S-C (211 aa).

The UBC core domain maps to 11–157 (HIIRRVYKEV…AKLMTEIHAQ (147 aa)). Cys95 serves as the catalytic Glycyl thioester intermediate. A disordered region spans residues 158 to 211 (GSTLRGKDPTDPCSSASATVVSGDGPMAKKHAGDRDKKLAAKKKTDKKRALRRL). Over residues 197–211 (AAKKKTDKKRALRRL) the composition is skewed to basic residues.

This sequence belongs to the ubiquitin-conjugating enzyme family.

The catalysed reaction is S-ubiquitinyl-[E1 ubiquitin-activating enzyme]-L-cysteine + [E2 ubiquitin-conjugating enzyme]-L-cysteine = [E1 ubiquitin-activating enzyme]-L-cysteine + S-ubiquitinyl-[E2 ubiquitin-conjugating enzyme]-L-cysteine.. Its pathway is protein modification; protein ubiquitination. In terms of biological role, catalyzes the covalent attachment of ubiquitin to other proteins. Acts as an essential factor of the anaphase promoting complex/cyclosome (APC/C), a cell cycle-regulated ubiquitin ligase that controls progression through mitosis. Acts by specifically elongating 'Lys-11'-linked polyubiquitin chains initiated by the E2 enzyme ube2c/ubch10 on APC/C substrates, enhancing the degradation of APC/C substrates by the proteasome and promoting mitotic exit. In Xenopus laevis (African clawed frog), this protein is Ubiquitin-conjugating enzyme E2 S-C (ube2s-c).